The sequence spans 396 residues: Maltose/maltodextrin-binding periplasmic protein (396 aa).

Positions 1–26 (MKIKTGVGILALSALTTMMISAPALA) are cleaved as a signal peptide.

Belongs to the bacterial solute-binding protein 1 family. The complex is composed of two ATP-binding proteins (MalK), two transmembrane proteins (MalG and MalF) and a solute-binding protein (MalE).

The protein resides in the periplasm. In terms of biological role, part of the ABC transporter complex MalEFGK involved in maltose/maltodextrin import. Binds maltose and higher maltodextrins. This Salmonella typhimurium (strain LT2 / SGSC1412 / ATCC 700720) protein is Maltose/maltodextrin-binding periplasmic protein (malE).